The sequence spans 213 residues: Large ribosomal subunit protein uL1 (213 aa).

This sequence belongs to the universal ribosomal protein uL1 family. In terms of assembly, part of the 50S ribosomal subunit.

Its function is as follows. Binds directly to 23S rRNA. Probably involved in E site tRNA release. Protein L1 is also a translational repressor protein, it controls the translation of its operon by binding to its mRNA. The chain is Large ribosomal subunit protein uL1 from Picrophilus torridus (strain ATCC 700027 / DSM 9790 / JCM 10055 / NBRC 100828 / KAW 2/3).